A 545-amino-acid chain; its full sequence is CTP synthase (545 aa).

Residues 1–266 (MTTKYIFVTG…DSYFTERFGL (266 aa)) form an amidoligase domain region. A CTP-binding site is contributed by serine 14. UTP is bound at residue serine 14. Residues 15-20 (SLGKGI) and aspartate 72 contribute to the ATP site. Residues aspartate 72 and glutamate 140 each contribute to the Mg(2+) site. CTP contacts are provided by residues 147–149 (DIE), 187–192 (KTKPTQ), and lysine 223. UTP-binding positions include 187 to 192 (KTKPTQ) and lysine 223. 239 to 241 (KDV) serves as a coordination point for ATP. Positions 291-542 (TIGMVGKYVS…VKAAGEYQKR (252 aa)) constitute a Glutamine amidotransferase type-1 domain. Glycine 352 lines the L-glutamine pocket. The active-site Nucleophile; for glutamine hydrolysis is the cysteine 379. L-glutamine contacts are provided by residues 380–383 (LGMQ), glutamate 403, and arginine 470. Catalysis depends on residues histidine 515 and glutamate 517.

The protein belongs to the CTP synthase family. Homotetramer.

The enzyme catalyses UTP + L-glutamine + ATP + H2O = CTP + L-glutamate + ADP + phosphate + 2 H(+). The catalysed reaction is L-glutamine + H2O = L-glutamate + NH4(+). It carries out the reaction UTP + NH4(+) + ATP = CTP + ADP + phosphate + 2 H(+). It participates in pyrimidine metabolism; CTP biosynthesis via de novo pathway; CTP from UDP: step 2/2. With respect to regulation, allosterically activated by GTP, when glutamine is the substrate; GTP has no effect on the reaction when ammonia is the substrate. The allosteric effector GTP functions by stabilizing the protein conformation that binds the tetrahedral intermediate(s) formed during glutamine hydrolysis. Inhibited by the product CTP, via allosteric rather than competitive inhibition. Catalyzes the ATP-dependent amination of UTP to CTP with either L-glutamine or ammonia as the source of nitrogen. Regulates intracellular CTP levels through interactions with the four ribonucleotide triphosphates. This Aeromonas hydrophila subsp. hydrophila (strain ATCC 7966 / DSM 30187 / BCRC 13018 / CCUG 14551 / JCM 1027 / KCTC 2358 / NCIMB 9240 / NCTC 8049) protein is CTP synthase.